We begin with the raw amino-acid sequence, 125 residues long: Cytochrome c' (125 aa).

Heme c-binding residues include Arg10, Glu67, Cys116, Cys119, and His120.

Homodimer. In terms of processing, binds 1 heme c group covalently per subunit.

In terms of biological role, cytochrome c' is the most widely occurring bacterial c-type cytochrome. Cytochromes c' are high-spin proteins and the heme has no sixth ligand. Their exact function is not known. The chain is Cytochrome c' from Pararhodospirillum photometricum (Rhodospirillum photometricum).